We begin with the raw amino-acid sequence, 1066 residues long: MTPMSENNGSENTRDVSAAMMKSRSNSSEYAGGDGSFHASEVESQSSQGASGGNTSASKRRTKASRACDQCRKRKIRCDYDDDKGVCTSCRKNGESCAFERIQLKRGPSKGAVRGHSVSRSISGENNNTAATAVGSGGEFSSPSSRQGSVLLPPLGQYLPQPAPVPSNLNATQQQQFWKVPYHDFQGQRRGSIDSLSSDMSAKSVNIPQEHLLYASPSAGHPPLHSPVTFGPNNSSTDSGYWPFRNSGGEESDELRRKSGSNPPSLKNVSQPPPPPLQQQQQQQYSYSKFNNSFAQYGANGFPSRHGSIASEGMSPSASVPYQSVPMNQSNSNGLSQQQQQPIQWPKVQPKNLPPPQVQVQAADKEETLGNSFQKTIKKRRTVSASSGENKAEPGEYPLARFSSSGNDSLLGGNLVSPAGFVYGQIPEIQLIDIYYEFIHMVFPIIPLNKETVTNEILLVNTQPISPIHEINNYVILWFRNSLELLIRITLKRRSGHFYDSLTHSKERELSNEIRGNSNGGGSNDSKDDNLEMQGVFVTALNECLQKIVDIHPSFRENKDKISPKVKIIYLSTFVLLNYILAVVGYDNSFVLGMSTTIFKDFKVYELLLYDDEDDDATKSGSNDNDNTNNDNNSNNANNDNNDSRFYDENNAMNWDQAGYSITFKRLYVLLIIFDSLQCCSYGGPKLLNVPIEGASERFFQTKPHSNSKWVVDQSPTRMKFILQSVKFGELLAECSMKRRSICDLSRTQLTWEIPPYFLKGVTDEDDELFSLAQLLAAFILIRKEFVDCLLNLQDLETGELPTVDMELCGELIKLLCQLTSIILQALTVMMRTNPKNHIDYNYRPMKPMEHDDSGNSASRKFTTSQAESGKNSGNDFYHKLLGLQDNAEACLTNLLRGSISPYCISMLREIRNVMELVKKMPASLIGVVMACAGTHHNTANNNNNDPLAITFQSQELVVKLSNCMNDMMQITSLLNMIKPVNLSDQDSDNTSATATITTTETISKSLNRDHSIMRRLYYSKAAKRDKKHIYPSSSSSPQLQETITTLKSFVLIGWKLLDDFELGWS.

2 stretches are compositionally biased toward polar residues: residues 1 to 11 (MTPMSENNGSE) and 42 to 57 (VESQ…NTSA). 6 disordered regions span residues 1 to 70 (MTPM…ACDQ), 108 to 153 (PSKG…VLLP), 214 to 285 (YASP…QQQY), 298 to 399 (GANG…EYPL), 616 to 645 (DATK…NDSR), and 849 to 871 (MEHD…ESGK). A DNA-binding region (zn(2)-C6 fungal-type) is located at residues 68–97 (CDQCRKRKIRCDYDDDKGVCTSCRKNGESC). Composition is skewed to polar residues over residues 118-131 (VSRS…NTAA), 139-148 (EFSSPSSRQG), 260-270 (GSNPPSLKNVS), and 314-327 (MSPS…SVPM). Low complexity-rich tracts occupy residues 328–350 (NQSN…KVQP) and 622–641 (SNDN…NNDN). Residues 855–871 (GNSASRKFTTSQAESGK) show a composition bias toward polar residues.

This sequence belongs to the EDS1/RGT1 family.

Its subcellular location is the nucleus. It localises to the cytoplasm. In terms of biological role, glucose-responsive transcription factor that regulates expression of several glucose transporter (HXT) genes in response to glucose. In the absence of glucose, it functions as a transcriptional repressor, whereas high concentrations of glucose cause it to function as a transcriptional activator. In cells growing on low levels of glucose, has a neutral role, neither repressing nor activating transcription. In Zygosaccharomyces rouxii (strain ATCC 2623 / CBS 732 / NBRC 1130 / NCYC 568 / NRRL Y-229), this protein is Glucose transport transcription regulator RGT1 (RGT1).